The chain runs to 208 residues: Holliday junction resolvase RecU (208 aa).

Mg(2+) contacts are provided by Thr87, Asp89, Glu102, and Gln121.

Belongs to the RecU family. The cofactor is Mg(2+).

Its subcellular location is the cytoplasm. It catalyses the reaction Endonucleolytic cleavage at a junction such as a reciprocal single-stranded crossover between two homologous DNA duplexes (Holliday junction).. Its function is as follows. Endonuclease that resolves Holliday junction intermediates in genetic recombination. Cleaves mobile four-strand junctions by introducing symmetrical nicks in paired strands. Promotes annealing of linear ssDNA with homologous dsDNA. Required for DNA repair, homologous recombination and chromosome segregation. The sequence is that of Holliday junction resolvase RecU from Staphylococcus aureus (strain MRSA252).